A 207-amino-acid chain; its full sequence is Nitrile hydratase subunit alpha (207 aa).

Fe(3+) is bound by residues Cys-110, Cys-113, Ser-114, and Cys-115. At Cys-113 the chain carries Cysteine sulfinic acid (-SO2H). At Cys-115 the chain carries Cysteine sulfenic acid (-SOH).

It belongs to the nitrile hydratase subunit alpha family. In terms of assembly, heterodimer of an alpha and a beta chain. Fe(3+) serves as cofactor. Post-translationally, oxidation on Cys-113 is essential for the activity. In terms of processing, oxidation on Cys-115 stabilizes the Fe-NO ligand coordinated in the inactive form.

The enzyme catalyses an aliphatic primary amide = an aliphatic nitrile + H2O. With respect to regulation, inactivated by nitrosylation of the iron center in the dark and activated by photo-induced nitric oxide (NO) release. Inactivated by oxidation of Cys-115 to a sulfenic acid. Its function is as follows. NHase catalyzes the hydration of various nitrile compounds to the corresponding amides. Industrial production of acrylamide is now being developed using some of the enzymes of this class. The protein is Nitrile hydratase subunit alpha (nthA) of Rhodococcus erythropolis (Arthrobacter picolinophilus).